The sequence spans 432 residues: 3-phosphoshikimate 1-carboxyvinyltransferase (432 aa).

Positions 23, 24, and 28 each coordinate 3-phosphoshikimate. Residue K23 coordinates phosphoenolpyruvate. Residues G95 and R123 each coordinate phosphoenolpyruvate. The 3-phosphoshikimate site is built by S167, Q169, D317, and K344. Phosphoenolpyruvate is bound at residue Q169. D317 (proton acceptor) is an active-site residue. The phosphoenolpyruvate site is built by R348 and R390.

This sequence belongs to the EPSP synthase family. In terms of assembly, monomer.

The protein localises to the cytoplasm. It carries out the reaction 3-phosphoshikimate + phosphoenolpyruvate = 5-O-(1-carboxyvinyl)-3-phosphoshikimate + phosphate. It participates in metabolic intermediate biosynthesis; chorismate biosynthesis; chorismate from D-erythrose 4-phosphate and phosphoenolpyruvate: step 6/7. Functionally, catalyzes the transfer of the enolpyruvyl moiety of phosphoenolpyruvate (PEP) to the 5-hydroxyl of shikimate-3-phosphate (S3P) to produce enolpyruvyl shikimate-3-phosphate and inorganic phosphate. The protein is 3-phosphoshikimate 1-carboxyvinyltransferase of Staphylococcus aureus (strain Newman).